The following is a 428-amino-acid chain: Dihydroorotase (428 aa).

Zn(2+) contacts are provided by H59 and H61. Residues 61-63 and N93 contribute to the substrate site; that span reads HLR. D151, H178, and H231 together coordinate Zn(2+). N277 is a binding site for substrate. Position 304 (D304) interacts with Zn(2+). D304 is an active-site residue. Substrate contacts are provided by residues H308 and 322–323; that span reads FG.

The protein belongs to the metallo-dependent hydrolases superfamily. DHOase family. Class I DHOase subfamily. The cofactor is Zn(2+).

The catalysed reaction is (S)-dihydroorotate + H2O = N-carbamoyl-L-aspartate + H(+). The protein operates within pyrimidine metabolism; UMP biosynthesis via de novo pathway; (S)-dihydroorotate from bicarbonate: step 3/3. Catalyzes the reversible cyclization of carbamoyl aspartate to dihydroorotate. In Bacillus cereus (strain ZK / E33L), this protein is Dihydroorotase.